A 156-amino-acid polypeptide reads, in one-letter code: Small ribosomal subunit protein uS7 (156 aa).

It belongs to the universal ribosomal protein uS7 family. Part of the 30S ribosomal subunit. Contacts proteins S9 and S11.

One of the primary rRNA binding proteins, it binds directly to 16S rRNA where it nucleates assembly of the head domain of the 30S subunit. Is located at the subunit interface close to the decoding center, probably blocks exit of the E-site tRNA. The sequence is that of Small ribosomal subunit protein uS7 from Symbiobacterium thermophilum (strain DSM 24528 / JCM 14929 / IAM 14863 / T).